A 216-amino-acid polypeptide reads, in one-letter code: MFKPSAHRRLPREDDIIQEDDEDGPLWPSALRRLSNEEERLKIADGDERKLFSAYPRGSMENRDYKVWDIYFTLGGDSLYAGRILKAVMKFPSSYPLRPPTLKFVSKMFHPNIYEDGKMCISILEEDKQQDSSVFGDPKDKWTPVQNIRTIVMSIVVILNSPNISSPANVDASVMYRDNPEEYIKEVIRIAREEDEKLRRTDPQAREVALQMKAEN.

A compositionally biased stretch (basic residues) spans 1-10 (MFKPSAHRRL). Residues 1–29 (MFKPSAHRRLPREDDIIQEDDEDGPLWPS) are disordered. Residues 29 to 196 (SALRRLSNEE…VIRIAREEDE (168 aa)) form the UBC core domain. Cysteine 120 functions as the Glycyl thioester intermediate in the catalytic mechanism.

It belongs to the ubiquitin-conjugating enzyme family.

The catalysed reaction is S-ubiquitinyl-[E1 ubiquitin-activating enzyme]-L-cysteine + [E2 ubiquitin-conjugating enzyme]-L-cysteine = [E1 ubiquitin-activating enzyme]-L-cysteine + S-ubiquitinyl-[E2 ubiquitin-conjugating enzyme]-L-cysteine.. It functions in the pathway protein modification; protein ubiquitination. Catalyzes the covalent attachment of ubiquitin to other proteins so as to signal them for selective protein degradation. Involved in the formation of multiubiquitin chains. In Encephalitozoon cuniculi (strain GB-M1) (Microsporidian parasite), this protein is Probable ubiquitin-conjugating enzyme E2 ECU01_1010.